Reading from the N-terminus, the 153-residue chain is Putative ubiquitin-conjugating enzyme E2 N-like (153 aa).

Residues 3–150 (ELPHRIIKET…ARAWTRLYAM (148 aa)) enclose the UBC core domain. Residue Lys83 is modified to N6-acetyllysine.

Belongs to the ubiquitin-conjugating enzyme family. As to expression, expressed in epididymis (at protein level).

The protein is Putative ubiquitin-conjugating enzyme E2 N-like (UBE2NL) of Homo sapiens (Human).